We begin with the raw amino-acid sequence, 310 residues long: HPr kinase/phosphorylase (310 aa).

Catalysis depends on residues histidine 138 and lysine 159. Glycine 153–serine 160 lines the ATP pocket. Mg(2+) is bound at residue serine 160. Aspartate 177 serves as the catalytic Proton acceptor; for phosphorylation activity. Proton donor; for dephosphorylation activity. The important for the catalytic mechanism of both phosphorylation and dephosphorylation stretch occupies residues leucine 201 to aspartate 210. Glutamate 202 serves as a coordination point for Mg(2+). Residue arginine 243 is part of the active site. The tract at residues proline 264–arginine 269 is important for the catalytic mechanism of dephosphorylation.

The protein belongs to the HPrK/P family. As to quaternary structure, homohexamer. Mg(2+) is required as a cofactor.

It catalyses the reaction [HPr protein]-L-serine + ATP = [HPr protein]-O-phospho-L-serine + ADP + H(+). The catalysed reaction is [HPr protein]-O-phospho-L-serine + phosphate + H(+) = [HPr protein]-L-serine + diphosphate. Functionally, catalyzes the ATP- as well as the pyrophosphate-dependent phosphorylation of a specific serine residue in HPr, a phosphocarrier protein of the phosphoenolpyruvate-dependent sugar phosphotransferase system (PTS). HprK/P also catalyzes the pyrophosphate-producing, inorganic phosphate-dependent dephosphorylation (phosphorolysis) of seryl-phosphorylated HPr (P-Ser-HPr). The two antagonistic activities of HprK/P are regulated by several intracellular metabolites, which change their concentration in response to the absence or presence of rapidly metabolisable carbon sources (glucose, fructose, etc.) in the growth medium. Therefore, by controlling the phosphorylation state of HPr, HPrK/P is a sensor enzyme that plays a major role in the regulation of carbon metabolism and sugar transport: it mediates carbon catabolite repression (CCR), and regulates PTS-catalyzed carbohydrate uptake and inducer exclusion. This is HPr kinase/phosphorylase from Streptococcus uberis (strain ATCC BAA-854 / 0140J).